The sequence spans 222 residues: Urease accessory protein UreF (222 aa).

This sequence belongs to the UreF family. UreD, UreF and UreG form a complex that acts as a GTP-hydrolysis-dependent molecular chaperone, activating the urease apoprotein by helping to assemble the nickel containing metallocenter of UreC. The UreE protein probably delivers the nickel.

It localises to the cytoplasm. In terms of biological role, required for maturation of urease via the functional incorporation of the urease nickel metallocenter. In Roseobacter denitrificans (strain ATCC 33942 / OCh 114) (Erythrobacter sp. (strain OCh 114)), this protein is Urease accessory protein UreF.